Consider the following 1132-residue polypeptide: Major DNA-binding protein (1132 aa).

The interval 1103–1132 is required for nuclear localization; it reads VEELFPSPGVPSLTVGKKRKIASLLSDLDL.

It belongs to the herpesviridae major DNA-binding protein family. As to quaternary structure, homooligomers. Forms double-helical filaments necessary for the formation of replication compartments within the host nucleus. Interacts with the origin-binding protein. Interacts with the helicase primase complex; this interaction stimulates primer synthesis activity of the helicase-primase complex. Interacts with the DNA polymerase. Interacts with the alkaline exonuclease; this interaction increases its nuclease processivity.

The protein localises to the host nucleus. Functionally, plays several crucial roles in viral infection. Participates in the opening of the viral DNA origin to initiate replication by interacting with the origin-binding protein. May disrupt loops, hairpins and other secondary structures present on ssDNA to reduce and eliminate pausing of viral DNA polymerase at specific sites during elongation. Promotes viral DNA recombination by performing strand-transfer, characterized by the ability to transfer a DNA strand from a linear duplex to a complementary single-stranded DNA circle. Can also catalyze the renaturation of complementary single strands. Additionally, reorganizes the host cell nucleus, leading to the formation of prereplicative sites and replication compartments. This process is driven by the protein which can form double-helical filaments in the absence of DNA. The chain is Major DNA-binding protein from Human herpesvirus 8 type P (isolate GK18) (HHV-8).